Consider the following 506-residue polypeptide: Histidine ammonia-lyase (506 aa).

The 5-imidazolinone (Ala-Gly) cross-link spans 141–143 (ASG). Ser-142 bears the 2,3-didehydroalanine (Ser) mark.

The protein belongs to the PAL/histidase family. Contains an active site 4-methylidene-imidazol-5-one (MIO), which is formed autocatalytically by cyclization and dehydration of residues Ala-Ser-Gly.

Its subcellular location is the cytoplasm. It catalyses the reaction L-histidine = trans-urocanate + NH4(+). It participates in amino-acid degradation; L-histidine degradation into L-glutamate; N-formimidoyl-L-glutamate from L-histidine: step 1/3. The polypeptide is Histidine ammonia-lyase (Burkholderia multivorans (strain ATCC 17616 / 249)).